The following is a 68-amino-acid chain: Beta-defensin 1 (68 aa).

An N-terminal signal peptide occupies residues Met1–Gly21. A propeptide spanning residues Asp22 to Ser32 is cleaved from the precursor. Intrachain disulfides connect Cys37–Cys66, Cys44–Cys59, and Cys49–Cys67.

Belongs to the beta-defensin family. Monomer. Homodimer.

Its subcellular location is the secreted. It localises to the membrane. In terms of biological role, has bactericidal activity. May act as a ligand for C-C chemokine receptor CCR6. Positively regulates the sperm motility and bactericidal activity in a CCR6-dependent manner. Binds to CCR6 and triggers Ca2+ mobilization in the sperm which is important for its motility. The polypeptide is Beta-defensin 1 (DEFB1) (Allochrocebus preussi (Preuss's monkey)).